The primary structure comprises 151 residues: Putative pre-16S rRNA nuclease (151 aa).

It belongs to the YqgF nuclease family.

It is found in the cytoplasm. Could be a nuclease involved in processing of the 5'-end of pre-16S rRNA. This is Putative pre-16S rRNA nuclease from Onion yellows phytoplasma (strain OY-M).